The sequence spans 375 residues: MAINIEYVILRHLQMELKAPFTTSFGTFQRKELILVEVVDRDGVSGWGESVAFSAPWYSEETVKTNWHMLEDFLVPLALAEPIHHPEELSKRFSAIRQNNMAKAALEGAVWDLYAKRLGVPLSQALGGAKKDIEVGVSIGIQPTVADLLQVIERYVAQGYRRIKVKIKPSWDVDVIREVRRVFPDVPLMADANSAYTLVDADRLKALDEFGLLMIEQPLAADDLVDHARLQPLLQTPICLDESIRSYDDARKALDLGSCRIINIKIGRVGGLGEAKRIHDLCAERGAPVWCGGMLEAGVGRAHNIAITTLENFTLPGDTAASSHYWERDIITPEVEVHGGLIRVPDAPGIGYDVDRRQVERYTQFAKVFHRTATA.

Lysine 166 acts as the Proton donor in catalysis. Positions 191, 216, and 241 each coordinate Mg(2+). The active-site Proton acceptor is lysine 265.

The protein belongs to the mandelate racemase/muconate lactonizing enzyme family. MenC type 2 subfamily. Homotetramer. A divalent metal cation is required as a cofactor.

The catalysed reaction is (1R,6R)-6-hydroxy-2-succinyl-cyclohexa-2,4-diene-1-carboxylate = 2-succinylbenzoate + H2O. It catalyses the reaction N-acetyl-D-methionine = N-acetyl-L-methionine. It participates in quinol/quinone metabolism; 1,4-dihydroxy-2-naphthoate biosynthesis; 1,4-dihydroxy-2-naphthoate from chorismate: step 4/7. It functions in the pathway quinol/quinone metabolism; menaquinone biosynthesis. Functionally, converts 2-succinyl-6-hydroxy-2,4-cyclohexadiene-1-carboxylate (SHCHC) to 2-succinylbenzoate (OSB). Also acts as a N-succinylamino acid racemase (NSAR) that catalyzes the racemization of N-succinyl-D/L-phenylalanine. Can catalyze the racemization of a broad range of N-acylamino acids, including N-acetyl-D-methionine, N-formyl-D/L-methionine, N-formyl-D/L-norleucine, N-formyl-D/L-aminobutyric acid, N-formyl-D/L-norvaline, N-formyl-D/L-homophenylalanine, N-carbamoyl-D-methionine and N-carbamoyl-D-norleucine. May be a bifunctional enzyme involved in menaquinone biosynthesis and in an irreversible pathway for the conversion of D- to L-amino acids, thereby facilitating the survival and/or growth of the organism. This Geobacillus stearothermophilus (Bacillus stearothermophilus) protein is o-succinylbenzoate synthase.